The sequence spans 714 residues: Calpain-1 catalytic subunit (714 aa).

The region spanning 55 to 354 is the Calpain catalytic domain; it reads LFRDEAFPPV…FTRLEICNLT (300 aa). Glutamine 109 and aspartate 114 together coordinate Ca(2+). Residues cysteine 115, histidine 272, and asparagine 296 contribute to the active site. The Ca(2+) site is built by serine 316, aspartate 318, and glutamate 323. At threonine 354 the chain carries Phosphothreonine. The tract at residues 355-526 is domain III; sequence PDALKSRTIR…KSAGTAELDD (172 aa). The segment at 527 to 542 is linker; the sequence is QIQANLPDEQVLSEEE. EF-hand domains lie at 541–576, 585–618, 615–650, and 680–714; these read EEIDENFKALFRQLAGEDMEISVKELRTILNRIISK, FSLESCRSMVNLMDRDGNGKLGLVEFNILWNRIR, NRIRNYLSIFRKFDLDKSGSMSAYEMRMAIESAGFK, and VRLETMFRFFKTLDTDLDGVVTFDLFKWLQLTMFA. Positions 543–713 are domain IV; that stretch reads IDENFKALFR…LFKWLQLTMF (171 aa). Residues aspartate 598, aspartate 600, asparagine 602, lysine 604, glutamate 609, aspartate 628, aspartate 630, serine 632, serine 634, and glutamate 639 each contribute to the Ca(2+) site.

The protein belongs to the peptidase C2 family. Forms a heterodimer with a small (regulatory) subunit (CAPNS1). Ca(2+) is required as a cofactor. In terms of processing, undergoes calcium-induced successive autoproteolytic cleavages that generate a membrane-bound 78 kDa active form and an intracellular 75 kDa active form. Calpastatin reduces with high efficiency the transition from 78 kDa to 75 kDa calpain forms. As to expression, ubiquitous.

The protein localises to the cytoplasm. It localises to the cell membrane. The enzyme catalyses Broad endopeptidase specificity.. Its activity is regulated as follows. Activated by micromolar concentrations of calcium and inhibited by calpastatin. Calcium-regulated non-lysosomal thiol-protease which catalyze limited proteolysis of substrates involved in cytoskeletal remodeling and signal transduction. Proteolytically cleaves CTBP1. Cleaves and activates caspase-7 (CASP7). The protein is Calpain-1 catalytic subunit (CAPN1) of Macaca fascicularis (Crab-eating macaque).